Reading from the N-terminus, the 384-residue chain is PqqA peptide cyclase (384 aa).

Residues 15-231 (PGPPLWLLAE…NQWRDKLAAE (217 aa)) enclose the Radical SAM core domain. 3 residues coordinate [4Fe-4S] cluster: cysteine 29, cysteine 33, and cysteine 36.

It belongs to the radical SAM superfamily. PqqE family. Interacts with PqqD. The interaction is necessary for activity of PqqE. [4Fe-4S] cluster is required as a cofactor.

It catalyses the reaction [PQQ precursor protein] + S-adenosyl-L-methionine = E-Y cross-linked-[PQQ precursor protein] + 5'-deoxyadenosine + L-methionine + H(+). The protein operates within cofactor biosynthesis; pyrroloquinoline quinone biosynthesis. In terms of biological role, catalyzes the cross-linking of a glutamate residue and a tyrosine residue in the PqqA protein as part of the biosynthesis of pyrroloquinoline quinone (PQQ). This chain is PqqA peptide cyclase, found in Ectopseudomonas mendocina (strain ymp) (Pseudomonas mendocina).